The primary structure comprises 259 residues: MKLSTLNETTPLVFNYANYVTPQFVANAVNVIGGSPIMAREVAEFSDLVAVSDAVVVNTGTWRRAELLETVKLIQIANQTQTVVVLDPVAVGIPSRSVPVQELLTNSKVDIIRGNAAEIAWFAGIDFASHGIDAVGSGNIEQIAQLAANKTGAIIAMSGPSDVISDGKTTRVLPVNVPLLASNVGTGDALSAIIGAFNGDEISLDNTVRAMAMMKLAGLTASHQVTTPGYFANQVLDELYLLSESKLETFIAKEVKKYE.

Met38 contacts substrate. 2 residues coordinate ATP: Arg113 and Ser158. Substrate is bound at residue Gly185.

It belongs to the Thz kinase family. Requires Mg(2+) as cofactor.

The enzyme catalyses 5-(2-hydroxyethyl)-4-methylthiazole + ATP = 4-methyl-5-(2-phosphooxyethyl)-thiazole + ADP + H(+). The protein operates within cofactor biosynthesis; thiamine diphosphate biosynthesis; 4-methyl-5-(2-phosphoethyl)-thiazole from 5-(2-hydroxyethyl)-4-methylthiazole: step 1/1. Its function is as follows. Catalyzes the phosphorylation of the hydroxyl group of 4-methyl-5-beta-hydroxyethylthiazole (THZ). The sequence is that of Hydroxyethylthiazole kinase from Leuconostoc citreum (strain KM20).